Here is a 260-residue protein sequence, read N- to C-terminus: Phosphatidylglycerol--prolipoprotein diacylglyceryl transferase (260 aa).

3 consecutive transmembrane segments (helical) span residues 16–36, 55–75, and 87–107; these read LEFR…YFIV, VIFS…ILFY, and LFAV…VILA. Residue Arg-138 participates in a 1,2-diacyl-sn-glycero-3-phospho-(1'-sn-glycerol) binding. The next 2 membrane-spanning stretches (helical) occupy residues 198-218 and 232-252; these read GVVF…VEFF and FSMG…MAVL.

This sequence belongs to the Lgt family.

It localises to the cell inner membrane. It carries out the reaction L-cysteinyl-[prolipoprotein] + a 1,2-diacyl-sn-glycero-3-phospho-(1'-sn-glycerol) = an S-1,2-diacyl-sn-glyceryl-L-cysteinyl-[prolipoprotein] + sn-glycerol 1-phosphate + H(+). It participates in protein modification; lipoprotein biosynthesis (diacylglyceryl transfer). Its function is as follows. Catalyzes the transfer of the diacylglyceryl group from phosphatidylglycerol to the sulfhydryl group of the N-terminal cysteine of a prolipoprotein, the first step in the formation of mature lipoproteins. This is Phosphatidylglycerol--prolipoprotein diacylglyceryl transferase from Geobacter sulfurreducens (strain ATCC 51573 / DSM 12127 / PCA).